The chain runs to 539 residues: Chaperonin GroEL (539 aa).

Residues 29–32, 86–90, Gly-413, 476–478, and Asp-492 each bind ATP; these read TIGP, DGTTT, and NAA.

Belongs to the chaperonin (HSP60) family. Forms a cylinder of 14 subunits composed of two heptameric rings stacked back-to-back. Interacts with the co-chaperonin GroES.

It is found in the cytoplasm. The catalysed reaction is ATP + H2O + a folded polypeptide = ADP + phosphate + an unfolded polypeptide.. Its function is as follows. Together with its co-chaperonin GroES, plays an essential role in assisting protein folding. The GroEL-GroES system forms a nano-cage that allows encapsulation of the non-native substrate proteins and provides a physical environment optimized to promote and accelerate protein folding. This chain is Chaperonin GroEL, found in Leuconostoc mesenteroides subsp. mesenteroides (strain ATCC 8293 / DSM 20343 / BCRC 11652 / CCM 1803 / JCM 6124 / NCDO 523 / NBRC 100496 / NCIMB 8023 / NCTC 12954 / NRRL B-1118 / 37Y).